Consider the following 349-residue polypeptide: MTALFEPTEHPHRRYNPLIDQWVLVSPHRAKRPWQGQQEKVNEEQKPSYDPTCYLCPSNKRITGELNPDYRKPYVFKNDFSALLEDTPAPEKSSDPLFQSSQARGESRVICFSPDHSKTLPLLTALEIEEVIKVWQEQLRELGAKYQWVQIFENKGAAMGCSNPHPHGQIWANSFLPNEVAREDRTQRDYLLKHGSVMLVDYVKRELALKERIVVETEHWIALVPYWAIWPFETLLLPKTHVKRLTELSDEQSKDLAVILKKLTTKYDNLFETSFPYSMGFHAAPFNGEDNEHWQLHAHFYPPLLRSATVRKFMVGYEMLGENQRDLTAEQAAERLRALSEVHYKERTK.

A UDP-alpha-D-glucose-binding site is contributed by 29–32 (RAKR). Zn(2+) is bound by residues Cys-53 and Cys-56. Position 78–79 (78–79 (ND)) interacts with UDP-alpha-D-glucose. Position 116 (His-116) interacts with Zn(2+). UDP-alpha-D-glucose contacts are provided by residues Asn-154 and 160-162 (GCS). Residue His-165 coordinates Zn(2+). His-167 acts as the Tele-UMP-histidine intermediate in catalysis. A UDP-alpha-D-glucose-binding site is contributed by Gln-169. The Fe cation site is built by Glu-183, His-282, His-297, and His-299. UDP-alpha-D-glucose contacts are provided by residues 312–313 (KF), 317–318 (YE), and Gln-324.

This sequence belongs to the galactose-1-phosphate uridylyltransferase type 1 family. The cofactor is Zn(2+).

The enzyme catalyses alpha-D-galactose 1-phosphate + UDP-alpha-D-glucose = alpha-D-glucose 1-phosphate + UDP-alpha-D-galactose. It functions in the pathway carbohydrate metabolism; galactose metabolism. This Haemophilus influenzae (strain ATCC 51907 / DSM 11121 / KW20 / Rd) protein is Galactose-1-phosphate uridylyltransferase (galT).